The primary structure comprises 90 residues: Small ribosomal subunit protein uS15c (90 aa).

The protein belongs to the universal ribosomal protein uS15 family. As to quaternary structure, part of the 30S ribosomal subunit.

The protein resides in the plastid. Its subcellular location is the chloroplast. In Acorus calamus (Sweet flag), this protein is Small ribosomal subunit protein uS15c (rps15).